Here is a 378-residue protein sequence, read N- to C-terminus: Erythronate-4-phosphate dehydrogenase (378 aa).

S45 and T66 together coordinate substrate. Residues D146 and T175 each contribute to the NAD(+) site. The active site involves R208. Residue D232 participates in NAD(+) binding. E237 is an active-site residue. The active-site Proton donor is H254. Residue G257 coordinates NAD(+). Y258 is a binding site for substrate.

This sequence belongs to the D-isomer specific 2-hydroxyacid dehydrogenase family. PdxB subfamily. In terms of assembly, homodimer.

It localises to the cytoplasm. It catalyses the reaction 4-phospho-D-erythronate + NAD(+) = (R)-3-hydroxy-2-oxo-4-phosphooxybutanoate + NADH + H(+). It participates in cofactor biosynthesis; pyridoxine 5'-phosphate biosynthesis; pyridoxine 5'-phosphate from D-erythrose 4-phosphate: step 2/5. Catalyzes the oxidation of erythronate-4-phosphate to 3-hydroxy-2-oxo-4-phosphonooxybutanoate. The protein is Erythronate-4-phosphate dehydrogenase of Shigella flexneri serotype 5b (strain 8401).